The sequence spans 368 residues: Histidinol-phosphate aminotransferase (368 aa).

Lys224 is modified (N6-(pyridoxal phosphate)lysine).

This sequence belongs to the class-II pyridoxal-phosphate-dependent aminotransferase family. Histidinol-phosphate aminotransferase subfamily. As to quaternary structure, homodimer. Pyridoxal 5'-phosphate is required as a cofactor.

It carries out the reaction L-histidinol phosphate + 2-oxoglutarate = 3-(imidazol-4-yl)-2-oxopropyl phosphate + L-glutamate. It functions in the pathway amino-acid biosynthesis; L-histidine biosynthesis; L-histidine from 5-phospho-alpha-D-ribose 1-diphosphate: step 7/9. The polypeptide is Histidinol-phosphate aminotransferase (Agrobacterium fabrum (strain C58 / ATCC 33970) (Agrobacterium tumefaciens (strain C58))).